The following is a 65-amino-acid chain: Large ribosomal subunit protein uL29 (65 aa).

Belongs to the universal ribosomal protein uL29 family.

The sequence is that of Large ribosomal subunit protein uL29 from Buchnera aphidicola subsp. Cinara cedri (strain Cc).